The following is a 66-amino-acid chain: Putative alpha-neurotoxin RjAa13 (66 aa).

An LCN-type CS-alpha/beta domain is found at 1–60 (KEGYPVDWGNCKYECMSDAYCKDLCVDRKAKSGYCYKLNWSCYCEGLPDDSPIKTNGHCR). 4 cysteine pairs are disulfide-bonded: cysteine 11–cysteine 59, cysteine 15–cysteine 35, cysteine 21–cysteine 42, and cysteine 25–cysteine 44.

The protein belongs to the long (4 C-C) scorpion toxin superfamily. Sodium channel inhibitor family. Alpha subfamily. As to expression, expressed by the venom gland.

It is found in the secreted. Functionally, alpha toxins bind voltage-independently at site-3 of sodium channels (Nav) and inhibits the inactivation of the activated channels, thereby blocking neuronal transmission. This is Putative alpha-neurotoxin RjAa13 from Rhopalurus junceus (Caribbean blue scorpion).